Here is a 256-residue protein sequence, read N- to C-terminus: Acetyl-coenzyme A carboxylase carboxyl transferase subunit alpha (256 aa).

Positions 1–236 constitute a CoA carboxyltransferase C-terminal domain; it reads MTDVSRVLKE…KANLIEQITS (236 aa).

It belongs to the AccA family. As to quaternary structure, acetyl-CoA carboxylase is a heterohexamer composed of biotin carboxyl carrier protein (AccB), biotin carboxylase (AccC) and two subunits each of ACCase subunit alpha (AccA) and ACCase subunit beta (AccD).

The protein resides in the cytoplasm. The enzyme catalyses N(6)-carboxybiotinyl-L-lysyl-[protein] + acetyl-CoA = N(6)-biotinyl-L-lysyl-[protein] + malonyl-CoA. It functions in the pathway lipid metabolism; malonyl-CoA biosynthesis; malonyl-CoA from acetyl-CoA: step 1/1. Functionally, component of the acetyl coenzyme A carboxylase (ACC) complex. First, biotin carboxylase catalyzes the carboxylation of biotin on its carrier protein (BCCP) and then the CO(2) group is transferred by the carboxyltransferase to acetyl-CoA to form malonyl-CoA. The polypeptide is Acetyl-coenzyme A carboxylase carboxyl transferase subunit alpha (Streptococcus pyogenes serotype M2 (strain MGAS10270)).